We begin with the raw amino-acid sequence, 203 residues long: Ribosomal RNA small subunit methyltransferase G (203 aa).

S-adenosyl-L-methionine-binding positions include Gly73, Leu78, 124–125 (VE), and Arg139.

Belongs to the methyltransferase superfamily. RNA methyltransferase RsmG family.

Its subcellular location is the cytoplasm. It carries out the reaction guanosine(527) in 16S rRNA + S-adenosyl-L-methionine = N(7)-methylguanosine(527) in 16S rRNA + S-adenosyl-L-homocysteine. Specifically methylates the N7 position of guanine in position 527 of 16S rRNA. This chain is Ribosomal RNA small subunit methyltransferase G, found in Haemophilus influenzae (strain PittEE).